The following is a 387-amino-acid chain: Mannitol-1-phosphate 5-dehydrogenase (387 aa).

Residue 3–14 (ALHFGAGNIGRG) participates in NAD(+) binding.

It belongs to the mannitol dehydrogenase family.

The enzyme catalyses D-mannitol 1-phosphate + NAD(+) = beta-D-fructose 6-phosphate + NADH + H(+). This chain is Mannitol-1-phosphate 5-dehydrogenase, found in Yersinia pseudotuberculosis serotype IB (strain PB1/+).